A 465-amino-acid chain; its full sequence is 23S rRNA (uracil(1939)-C(5))-methyltransferase RlmD (465 aa).

Residues 1-22 form a disordered region; that stretch reads MSEAVPTSARKSKNAPVAPGPA. The TRAM domain occupies 16-80; it reads PVAPGPAPVL…PSYEQATVVD (65 aa). 4 residues coordinate [4Fe-4S] cluster: cysteine 93, cysteine 99, cysteine 102, and cysteine 181. S-adenosyl-L-methionine is bound by residues glutamine 289, phenylalanine 318, asparagine 323, glutamate 339, asparagine 367, and aspartate 388. The active-site Nucleophile is cysteine 421.

It belongs to the class I-like SAM-binding methyltransferase superfamily. RNA M5U methyltransferase family. RlmD subfamily.

It carries out the reaction uridine(1939) in 23S rRNA + S-adenosyl-L-methionine = 5-methyluridine(1939) in 23S rRNA + S-adenosyl-L-homocysteine + H(+). Functionally, catalyzes the formation of 5-methyl-uridine at position 1939 (m5U1939) in 23S rRNA. The chain is 23S rRNA (uracil(1939)-C(5))-methyltransferase RlmD from Burkholderia ambifaria (strain ATCC BAA-244 / DSM 16087 / CCUG 44356 / LMG 19182 / AMMD) (Burkholderia cepacia (strain AMMD)).